A 171-amino-acid chain; its full sequence is S-ribosylhomocysteine lyase (171 aa).

Residues histidine 54, histidine 58, and cysteine 128 each contribute to the Fe cation site.

The protein belongs to the LuxS family. As to quaternary structure, homodimer. It depends on Fe cation as a cofactor.

The enzyme catalyses S-(5-deoxy-D-ribos-5-yl)-L-homocysteine = (S)-4,5-dihydroxypentane-2,3-dione + L-homocysteine. In terms of biological role, involved in the synthesis of autoinducer 2 (AI-2) which is secreted by bacteria and is used to communicate both the cell density and the metabolic potential of the environment. The regulation of gene expression in response to changes in cell density is called quorum sensing. Catalyzes the transformation of S-ribosylhomocysteine (RHC) to homocysteine (HC) and 4,5-dihydroxy-2,3-pentadione (DPD). This Campylobacter curvus (strain 525.92) protein is S-ribosylhomocysteine lyase.